The primary structure comprises 334 residues: Aspartate carbamoyltransferase catalytic subunit (334 aa).

Residues R71 and T72 each contribute to the carbamoyl phosphate site. K99 contributes to the L-aspartate binding site. Residues R121, H151, and Q154 each contribute to the carbamoyl phosphate site. The L-aspartate site is built by R184 and R239. Residues G280 and P281 each contribute to the carbamoyl phosphate site.

Belongs to the aspartate/ornithine carbamoyltransferase superfamily. ATCase family. Heterododecamer (2C3:3R2) of six catalytic PyrB chains organized as two trimers (C3), and six regulatory PyrI chains organized as three dimers (R2).

The enzyme catalyses carbamoyl phosphate + L-aspartate = N-carbamoyl-L-aspartate + phosphate + H(+). It participates in pyrimidine metabolism; UMP biosynthesis via de novo pathway; (S)-dihydroorotate from bicarbonate: step 2/3. Its function is as follows. Catalyzes the condensation of carbamoyl phosphate and aspartate to form carbamoyl aspartate and inorganic phosphate, the committed step in the de novo pyrimidine nucleotide biosynthesis pathway. This Pseudomonas savastanoi pv. phaseolicola (strain 1448A / Race 6) (Pseudomonas syringae pv. phaseolicola (strain 1448A / Race 6)) protein is Aspartate carbamoyltransferase catalytic subunit.